A 182-amino-acid chain; its full sequence is MRFVVALTGASGQILGIRLIEKLTELGAEVYAVASRAAKITLKAETDYDEGYVREIATKYYDEDEIAAPFASGSFRHDGMAVVPCSIKTASSIAYGIADNLIARAADVTLKEKRRLVLAIREAPLHSGHLKTLARLAEMGAVIFPPVLSFYTRPKSVDDLIEHTVSRIAEQLGVEVDYRRWG.

Residues 9-11, S35, 86-89, and R121 contribute to the FMN site; these read GAS and SIKT. The dimethylallyl phosphate site is built by Y151 and R167.

Belongs to the UbiX/PAD1 family.

The catalysed reaction is dimethylallyl phosphate + FMNH2 = prenylated FMNH2 + phosphate. Flavin prenyltransferase that catalyzes the synthesis of the prenylated FMN cofactor (prenyl-FMN) for 4-hydroxy-3-polyprenylbenzoic acid decarboxylase UbiD. The prenyltransferase is metal-independent and links a dimethylallyl moiety from dimethylallyl monophosphate (DMAP) to the flavin N5 and C6 atoms of FMN. This Archaeoglobus fulgidus (strain ATCC 49558 / DSM 4304 / JCM 9628 / NBRC 100126 / VC-16) protein is Flavin prenyltransferase UbiX.